A 150-amino-acid polypeptide reads, in one-letter code: Arginine repressor (150 aa).

The protein belongs to the ArgR family.

Its subcellular location is the cytoplasm. It participates in amino-acid biosynthesis; L-arginine biosynthesis [regulation]. Its function is as follows. Regulates arginine biosynthesis genes. The sequence is that of Arginine repressor from Staphylococcus aureus (strain Mu3 / ATCC 700698).